We begin with the raw amino-acid sequence, 478 residues long: Melanopsin (478 aa).

A compositionally biased stretch (pro residues) spans 1 to 14; sequence MNPPSGPRVPPSPT. Residues 1 to 32 form a disordered region; the sequence is MNPPSGPRVPPSPTQEPSCMATPAPPSWWDSS. The Extracellular segment spans residues 1–72; it reads MNPPSGPRVP…VDVPDHAHYT (72 aa). Residues 73–93 form a helical membrane-spanning segment; that stretch reads LGTVILLVGLTGMLGNLTVIY. The Cytoplasmic segment spans residues 94 to 107; that stretch reads TFCRSRSLRTPANM. Residues 108-128 form a helical membrane-spanning segment; sequence FIINLAVSDFLMSFTQAPVFF. The Extracellular segment spans residues 129-144; sequence TSSLYKQWLFGETGCE. A disulfide bridge connects residues Cys-143 and Cys-221. A helical membrane pass occupies residues 145–165; it reads FYAFCGALFGISSMITLTAIA. The Cytoplasmic segment spans residues 166 to 188; the sequence is LDRYLVITRPLATFGVASKRRAA. A helical transmembrane segment spans residues 189-209; sequence FVLLGVWLYALAWSLPPFFGW. The Extracellular segment spans residues 210–238; the sequence is SAYVPEGLLTSCSWDYMSFTPAVRAYTML. Residues 239–259 form a helical membrane-spanning segment; that stretch reads LCCFVFFLPLLIIIYCYIFIF. Residues 260–296 are Cytoplasmic-facing; sequence RAIRETGRALQTFGACKGNGESLWQRQRLQSECKMAK. Residues 297-317 form a helical membrane-spanning segment; that stretch reads IMLLVILLFVLSWAPYSAVAL. Topologically, residues 318 to 332 are extracellular; the sequence is VAFAGYAHVLTPYMS. A helical transmembrane segment spans residues 333–353; it reads SVPAVIAKASAIHNPIIYAIT. Lys-340 carries the post-translational modification N6-(retinylidene)lysine. The Cytoplasmic portion of the chain corresponds to 354–478; the sequence is HPKYRVAIAQ…GLIPSQDPRM (125 aa). The tract at residues 440-478 is disordered; it reads LYGQGLEDLEAKAPPRPQGHEAETPGKTKGLIPSQDPRM. Basic and acidic residues predominate over residues 448–465; that stretch reads LEAKAPPRPQGHEAETPG.

Belongs to the G-protein coupled receptor 1 family. Opsin subfamily. Expressed in the retina.

It localises to the cell membrane. The protein localises to the cell projection. The protein resides in the axon. Its subcellular location is the dendrite. It is found in the perikaryon. Photoreceptor that binds cis-retinaldehydes. Contributes to pupillar reflex, photoentrainment and other non-image forming responses to light. May be involved in the optokinetic visual tracking response. May be involved in the regulation of retinal hyaloid vessel growth and regression. This is Melanopsin (OPN4) from Homo sapiens (Human).